Reading from the N-terminus, the 1142-residue chain is MASMKQQQTPASSAVTAAAAASSSATAAVAACEGERKAAAINSELWHACAGPLVSLPPVGSLVVYFPQGHSEQVAASMQKDVDAHVPSYPNLPSKLICLLHGVNLHADPDTDEVYAQMTLQPVNTYGKEALQISELALKQARPQMEFFCKTLTASDTSTHGGFSVPRRAAEKIFPPLDFSMQPPAQELQARDIHDNVWTFRHIYRGQPKRHLLTTGWSLFVSGKRLFAGDSVIVVRDEKHQLLLGIRRANRQPTNISSSVLSSDSMHIGVLAAAAHAAANSSPFTIFYNPRASPTEFVIPFAKYQKALYSNQISLGMRFRMMFETEELGTRRYMGTITGISDLDPVRWKNSQWRNLQVGWDESAAGERRNRVSIWEIEPVAAPFFLCPQPFFGVKRPRQLDDESEMENLFKRAMPWLGEEVCIKDTQNQNSTAPGLSLVQWMNMNRQQSSSLANTAAQSEYLQALGNPAMQNLAADELARQLYVQNNLLQQNCIQFNSPKLPQQMQTMNDLSKAAIPLNQLGAIINPQDQKQDAVNHQRQQNSIQVIPLSQAQSNLVQAQVIVQNQMQQQKPSPTQNPQRINGQRLLLSHQQKDQNLQLQQQLLLQQKQQLQQQQQQQQQNQQQLNKSLGQLVNLASQQSKLFDEELQLQILQKLQQQSLMSQSTSTLSQPPLIQEQQKLITDMQKQLSNSHSLAQQQMMPQQEIKPSLQATPLLPTVQQEQQQKLLQKQVSLADVSGVAFQPISSTNVIPKTGGAMIISGATQSVVTEEMPSCSTSPSTANGNHFTQSTKNRHCINTERLPPSTAPMLIPTSIDAVTATPLMTKELPKPNNNVKQSVVNSKLPNVAPGPQNCINHALQTDNLETSSSATSLCPSRTDGLVHQGFPSSNFNQHQMFKDALPDVEMEGVDPSNSGLFGINNDNLLGFPIETEDLLINALDSVKYQNHISTDVENNYPMQKDALQEISTSMVSQSFGQSDMAFNSIDSAINDGAFLNKNSWPAAPLLQRMRTFTKVYKRGAVGRSIDIGRYSGYEELKHALARMFGIEGQLEDRQRIGWKLVYKDHEDDILLLGDDPWEEFVNCVRCIRILSPQEVQQMSLDGDLGSNVLPNQACSSSDGVNGWRPRCDQNPGNPSIGPYDQFE.

The TF-B3 DNA-binding region spans 148–250 (FCKTLTASDT…QLLLGIRRAN (103 aa)). The PB1 domain occupies 1009 to 1093 (RTFTKVYKRG…RCIRILSPQE (85 aa)). Residues 1114–1142 (SSSDGVNGWRPRCDQNPGNPSIGPYDQFE) form a disordered region.

This sequence belongs to the ARF family. Homodimers and heterodimers. In terms of tissue distribution, expressed in roots, culms, leaves and young panicles.

It is found in the nucleus. Its function is as follows. Auxin response factors (ARFs) are transcriptional factors that bind specifically to the DNA sequence 5'-TGTCTC-3' found in the auxin-responsive promoter elements (AuxREs). This chain is Auxin response factor 5 (ARF5), found in Oryza sativa subsp. japonica (Rice).